The sequence spans 337 residues: Homeobox protein knotted-1-like 4 (337 aa).

Disordered stretches follow at residues 1-56 (MEQQ…SFHE) and 159-190 (FTLD…GLPE). Residues 27–38 (PTSTSTSPAVPS) show a composition bias toward low complexity. One can recognise an ELK domain in the interval 200 to 220 (ELKSHLLNKYSGYLSSLWREL). A DNA-binding region (homeobox; TALE-type) is located at residues 221–284 (SKKKKKGKLP…NQRKRHWKPT (64 aa)).

Belongs to the TALE/KNOX homeobox family.

The protein resides in the nucleus. The chain is Homeobox protein knotted-1-like 4 (OSH10) from Oryza sativa subsp. japonica (Rice).